The primary structure comprises 63 residues: Large ribosomal subunit protein bL28 (63 aa).

The protein belongs to the bacterial ribosomal protein bL28 family.

The protein is Large ribosomal subunit protein bL28 of Sulfurihydrogenibium sp. (strain YO3AOP1).